Reading from the N-terminus, the 377-residue chain is MAATEDDRLAGSGEGERLDFLRDRHVRFFQRCLQVLPERYSSLETSRLTIAFFALSGLDMLDSLDVVNKDDIIEWIYSLQVLPTEDRSNLDRCGFRGSSYLGIPFNPSKNPGTAHPYDSGHIAMTYTGLSCLIILGDDLSRVDKEACLAGLRALQLEDGSFCAVPEGSENDMRFVYCASCICYMLNNWSGMDMKKAISYIRRSMSYDNGLAQGAGLESHGGSTFCGIASLCLMGKLEEVFSEKELNRIKRWCIMRQQNGYHGRPNKPVDTCYSFWVGATLKLLKIFQYTNFEKNRNYILSTQDRLVGGFAKWPDSHPDALHAYFGICGLSLMEESGICKVHPALNVSTRTSERLRDLHQSWKTKDSKQCSDNVHISS.

PFTB repeat units lie at residues 144–186, 193–234, 245–284, and 291–333; these read KEAC…YMLN, MKKA…CLMG, LNRI…KLLK, and FEKN…SLME. Geranylgeranyl diphosphate-binding positions include 219–221 and 263–266; these read HGG and RPNK. 2 residues coordinate Zn(2+): Asp269 and Cys271. Position 272-275 (272-275) interacts with geranylgeranyl diphosphate; that stretch reads YSFW. His321 provides a ligand contact to Zn(2+).

Belongs to the protein prenyltransferase subunit beta family. Heterodimer of FNTA and PGGT1B. PGGT1B mediates interaction with substrate peptides. The cofactor is Zn(2+). It depends on Mg(2+) as a cofactor.

It catalyses the reaction geranylgeranyl diphosphate + L-cysteinyl-[protein] = S-geranylgeranyl-L-cysteinyl-[protein] + diphosphate. In terms of biological role, catalyzes the transfer of a geranylgeranyl moiety from geranylgeranyl diphosphate to a cysteine at the fourth position from the C-terminus of proteins with the C-terminal sequence Cys-aliphatic-aliphatic-X. Known substrates include RAC1, RAC2, RAP1A and RAP1B. This Rattus norvegicus (Rat) protein is Geranylgeranyl transferase type-1 subunit beta (Pggt1b).